The chain runs to 434 residues: APETALA2-like protein 2 (434 aa).

The disordered stretch occupies residues 1–116 (MLLDLNVESP…KTRRGPRSRS (116 aa)). The span at 12–23 (RSGTSSSSVLNS) shows a compositional bias: low complexity. Gly residues predominate over residues 25–38 (DAGGGGGGGGGGGL). Residues 72-87 (LPPPPPAAPSPAPAWQ) are compositionally biased toward pro residues. A compositionally biased stretch (basic residues) spans 104-113 (VAKKTRRGPR). Residues 106-115 (KKTRRGPRSR) carry the Nuclear localization signal motif. 2 DNA-binding regions (AP2/ERF) span residues 118–174 (QYRG…INFN) and 210–267 (KFRG…TNFE). The EAR signature appears at 291–295 (LDLRI).

This sequence belongs to the AP2/ERF transcription factor family. AP2 subfamily. May form homodimer. Interacts with TPR2/ASP1.

It is found in the nucleus. Probable transcription factor. Involved in spikelet transition. Together with SNB, controls synergistically inflorescence architecture and floral meristem establishment via the regulation of spatio-temporal expression of B- and E-function floral organ identity genes in the lodicules and of spikelet meristem genes. Prevents lemma and palea elongation as well as grain growth. This chain is APETALA2-like protein 2, found in Oryza sativa subsp. indica (Rice).